The primary structure comprises 240 residues: Sugar fermentation stimulation protein homolog (240 aa).

This sequence belongs to the SfsA family.

In Pasteurella multocida (strain Pm70), this protein is Sugar fermentation stimulation protein homolog.